Here is a 370-residue protein sequence, read N- to C-terminus: Phospho-N-acetylmuramoyl-pentapeptide-transferase (370 aa).

The next 10 helical transmembrane spans lie at 24–44, 78–98, 103–123, 138–158, 177–197, 209–229, 245–265, 273–293, 298–318, and 347–367; these read YLTFRSGMAMLTAYIVAVAMG, TMGGFMILAGLFVAALLWADL, VWVVLLITGSYGLLGFMDDYA, KLVAQFIVAIIATVILILFAP, ALVINLGWFYVAFAAFTIAGF, GLAIVPVMFAASTFGLIAYLV, GVGELAVLCGAIIGGGMGFLW, IFMGDTGSLALGGALGAIAVC, LVLGIVGGLFVAEALSVMIQV, and TVVIRFWIVSMILAFIGLATL.

It belongs to the glycosyltransferase 4 family. MraY subfamily. Mg(2+) is required as a cofactor.

It is found in the cell inner membrane. It catalyses the reaction UDP-N-acetyl-alpha-D-muramoyl-L-alanyl-gamma-D-glutamyl-meso-2,6-diaminopimeloyl-D-alanyl-D-alanine + di-trans,octa-cis-undecaprenyl phosphate = di-trans,octa-cis-undecaprenyl diphospho-N-acetyl-alpha-D-muramoyl-L-alanyl-D-glutamyl-meso-2,6-diaminopimeloyl-D-alanyl-D-alanine + UMP. It functions in the pathway cell wall biogenesis; peptidoglycan biosynthesis. Catalyzes the initial step of the lipid cycle reactions in the biosynthesis of the cell wall peptidoglycan: transfers peptidoglycan precursor phospho-MurNAc-pentapeptide from UDP-MurNAc-pentapeptide onto the lipid carrier undecaprenyl phosphate, yielding undecaprenyl-pyrophosphoryl-MurNAc-pentapeptide, known as lipid I. This is Phospho-N-acetylmuramoyl-pentapeptide-transferase from Caulobacter vibrioides (strain NA1000 / CB15N) (Caulobacter crescentus).